Consider the following 129-residue polypeptide: Mediator of RNA polymerase II transcription subunit 31-B (129 aa).

The protein belongs to the Mediator complex subunit 31 family. Component of the Mediator complex.

Its subcellular location is the nucleus. Its function is as follows. Component of the Mediator complex, a coactivator involved in the regulated transcription of nearly all RNA polymerase II-dependent genes. Mediator functions as a bridge to convey information from gene-specific regulatory proteins to the basal RNA polymerase II transcription machinery. Mediator is recruited to promoters by direct interactions with regulatory proteins and serves as a scaffold for the assembly of a functional preinitiation complex with RNA polymerase II and the general transcription factors. This is Mediator of RNA polymerase II transcription subunit 31-B (med31-b) from Xenopus laevis (African clawed frog).